The chain runs to 222 residues: Superoxide dismutase [Mn], mitochondrial (222 aa).

Residues 1–24 (MLSRAVCGTSRQLAPVLGYLGSRQ) constitute a mitochondrion transit peptide. His50 lines the Mn(2+) pocket. Position 58 is a 3'-nitrotyrosine (Tyr58). N6-acetyllysine; alternate occurs at positions 68 and 75. 2 positions are modified to N6-succinyllysine; alternate: Lys68 and Lys75. His98 serves as a coordination point for Mn(2+). N6-acetyllysine is present on Lys114. N6-acetyllysine; alternate occurs at positions 122 and 130. N6-succinyllysine; alternate is present on residues Lys122 and Lys130. Mn(2+) is bound by residues Asp183 and His187. Lys202 bears the N6-acetyllysine mark.

It belongs to the iron/manganese superoxide dismutase family. Homotetramer. It depends on Mn(2+) as a cofactor. Post-translationally, nitrated under oxidative stress. Nitration coupled with oxidation inhibits the catalytic activity. In terms of processing, acetylation at Lys-122 decreases enzymatic activity. Deacetylated by SIRT3 upon exposure to ionizing radiations or after long fasting. Polyubiquitinated; leading to proteasomal degradation. Deubiquitinated by USP36 which increases protein stability.

It is found in the mitochondrion matrix. It catalyses the reaction 2 superoxide + 2 H(+) = H2O2 + O2. Functionally, destroys superoxide anion radicals which are normally produced within the cells and which are toxic to biological systems. The polypeptide is Superoxide dismutase [Mn], mitochondrial (SOD2) (Homo sapiens (Human)).